We begin with the raw amino-acid sequence, 86 residues long: Defensin-like protein 97 (86 aa).

A signal peptide spans 1–27 (MGSLRVSTFAVAVVVCLSILLMSPTDG). 4 disulfide bridges follow: Cys-31–Cys-74, Cys-38–Cys-60, Cys-44–Cys-71, and Cys-48–Cys-73.

This sequence belongs to the DEFL family.

Its subcellular location is the secreted. The protein is Defensin-like protein 97 (LCR85) of Arabidopsis thaliana (Mouse-ear cress).